Consider the following 59-residue polypeptide: Potassium channel toxin alpha-KTx 3.10 (59 aa).

A signal peptide spans 1-22 (MKVFFAVLIALFVCSMVIGIHG). Cystine bridges form between C30–C50, C36–C55, and C40–C57.

This sequence belongs to the short scorpion toxin superfamily. Potassium channel inhibitor family. Alpha-KTx 03 subfamily. Expressed by the venom gland.

Its subcellular location is the secreted. In terms of biological role, inhibits insect potassium channel. Is at least a 100-fold more potent against the Drosophila Shaker channel than towards its mammalian homologs Kv1.1/KCNA1 and Kv1.3/KCNA3. This is Potassium channel toxin alpha-KTx 3.10 from Buthus israelis (Israeli scorpion).